The chain runs to 442 residues: 4-alpha-glucanotransferase (442 aa).

Residues D13, N15, D17, V19, and D21 each coordinate Ca(2+). The active-site Nucleophile is the D186. E216 (proton donor) is an active-site residue.

Belongs to the glycosyl hydrolase 13 family. As to quaternary structure, monomer. The cofactor is Ca(2+).

It localises to the cytoplasm. It carries out the reaction Transfers a segment of a (1-&gt;4)-alpha-D-glucan to a new position in an acceptor, which may be glucose or a (1-&gt;4)-alpha-D-glucan.. In terms of biological role, hydrolyzes the 1,4-alpha-glycoside bonds in oligomeric and polymeric 1,4-alpha-glucans and transfers oligosaccharides (maltotriose being the shortest one) to acceptor maltodextrins. The polypeptide is 4-alpha-glucanotransferase (mgtA) (Thermotoga neapolitana).